Consider the following 476-residue polypeptide: Protein transport protein Sec61 subunit alpha (476 aa).

Residues 2-33 (GIKFLEVIKPFCAVLPEIQKPERKIQFREKVL) lie on the Cytoplasmic side of the membrane. The chain crosses the membrane as a helical span at residues 34-53 (WTAITLFIFLVCCQIPLFGI). At 54-76 (MSSDSADPFYWMRVILASNRGTL) the chain is on the lumenal side. A helical transmembrane segment spans residues 77–96 (MELGISPIVTSGLIMQLLAG). The Cytoplasmic segment spans residues 97–117 (AKIIEVGDTPKDRALFNGAQK). A helical transmembrane segment spans residues 118–138 (LFGMIITIGQAIVYVMTGMYG). The Lumenal portion of the chain corresponds to 139–144 (DPSEMG). The chain crosses the membrane as a helical span at residues 145-165 (AGICLVIIIQLFVAGLIVLLL). Over 166–172 (DELLQKG) the chain is Cytoplasmic. Residues 173–193 (YGLGSGISLFIATNICETIVW) form a helical membrane-spanning segment. At 194 to 240 (KAFSPTTVNTGRGTEFEGAIIALFHLLATRTDKVRALREAFYRQNLP) the chain is on the lumenal side. The helical transmembrane segment at 241–261 (NLMNLIATVFVFAVVIYFQGF) threads the bilayer. Residues 262–288 (RVDLPIKSARYRGQYNTYPIKLFYTSN) are Cytoplasmic-facing. A helical transmembrane segment spans residues 289–309 (IPIILQSALVSNLYVISQMLS). The Lumenal portion of the chain corresponds to 310 to 354 (TRFSGNFLVNLLGTWSDTSTGGPARAYPVGGLCYYFSPPESFGSV). The helical transmembrane segment at 355 to 375 (LDDPVHASIYIVFMLGSCAFF) threads the bilayer. The Cytoplasmic portion of the chain corresponds to 376 to 420 (SKTWIEVSGSSAKDVAKQLKEQQMVMRGHRETSMVHELNRYIPTA). A helical membrane pass occupies residues 421-441 (AAFGGLCIGGLSVMADFLGAI). Residues 442 to 445 (GSGT) lie on the Lumenal side of the membrane. A helical membrane pass occupies residues 446 to 462 (GILLAVTIIYQYFEIFV). The Cytoplasmic segment spans residues 463–476 (KEQSEMGSMGALLF).

The protein belongs to the SecY/SEC61-alpha family. As to quaternary structure, the SEC61 channel-forming translocon complex consists of channel-forming core components SEC61A1, SEC61B and SEC61G and different auxiliary components such as SEC62 and SEC63. The SEC61 channel associates with the multi-pass translocon (MPT) complex.

It localises to the endoplasmic reticulum membrane. In terms of biological role, component of SEC61 channel-forming translocon complex that mediates transport of signal peptide-containing precursor polypeptides across the endoplasmic reticulum (ER). Forms a ribosome receptor and a gated pore in the ER membrane, both functions required for cotranslational translocation of nascent polypeptides. May cooperate with auxiliary protein SEC62, SEC63 and HSPA5/BiP to enable post-translational transport of small presecretory proteins. The SEC61 channel is also involved in ER membrane insertion of transmembrane proteins: it mediates membrane insertion of the first few transmembrane segments of proteins, while insertion of subsequent transmembrane regions of multi-pass membrane proteins is mediated by the multi-pass translocon (MPT) complex. The polypeptide is Protein transport protein Sec61 subunit alpha (sec61a) (Gadus ogac (Greenland cod)).